We begin with the raw amino-acid sequence, 1013 residues long: MNCCRTLRELEIQVGEKVFKNIKTVMKAFKLIDVNKTGLVRPQELRRVLETFCLKLRDEEYEKFSKHYNIHNDTAVDYNVFLKNLSINNDLNLRYCMGNQEVSLENQQARNSKKERLLGSASSEDIWRNYSLDDIERNFCLELSKSYEKIEKALSAGDPCKGGYVSFNYLKIVLDTFIYQIPRRIFIQLMKRFGLKATTKINWKQFLTSFHEPQGLQVSNKGPLTKRNSINSRSESRKENIITKLFRCTEDRSASLKKALLIINTKPDGPITREEFRYILNCVAIKLSDSEFKELMQILDPGDTGVVNTSMFIDLIEENCRMRKTSPCTDAKTPFLLAWDSVEEIVHDTIARNLQAFYNMLRSYDLGDTGLIGRNNFKKIMHVFCPFLTNAHFIKLCSKIQDIGSGRILYKKLLACIGIDGPPTVSPVLVPKDQLLSEHLQKDEQQQPDLSERTKPTEDKTTLTKKMTTEEVIEKFRKYIQQQDPAFKKRFLDFSKEPNGKINVHDFRKILEDTGMPMDDDQYALLTTKIGFEKEGMSYLDFAAGFEDPPMRGLETTPPQPPTPSKSYVNSHLITAEECLKLFPRRLKESFRDPYSAFFKTDVDRDGIINMHDLHRLLLHLLLNLKDDEFERFLGLLGLRLSVTLNFREFQNLCEKRPWRTDEAPQRLIRPKQKVADSELACEQAHQYLVTKAKNRWSDLSKNFLETDNEGNGILRRRDIKNALYGFDIPLTPREFEKLWARYNTEGKGHITYQEFLQKLGINYSPAVHQPCAEDYFNFMGHFTKPQQLQEEMKELQQSTEKAMAARDKLMDLHQDISKAFTKIDKSKTNYISICKMQKVLEECGCSLTEGELTHLLNSWGVSRHENAINYLDFLRAVENSKSTGAQPKEKEESMPISFATLNPQEVVRKIQEVVESSQLALSTAFSALDKEDTGFVKATEFGQVLKDFCYKLMDNQYHYFLRKLRIHLTPYINWKYFLQNFSCFLEEVRISAAHKHLFENELKLVFTKWIID.

5 EF-hand domains span residues 20–55 (KNIK…FCLK), 145–180 (KSYE…FIYQ), 251–286 (DRSA…VAIK), 287–322 (LSDS…NCRM), and 352–387 (RNLQ…FCPF). Residues 441–460 (QKDEQQQPDLSERTKPTEDK) are disordered. EF-hand domains follow at residues 482-517 (QQDP…TGMP), 589-624 (ESFR…LLLN), 695-730 (NRWS…FDIP), 731-766 (LTPR…NYSP), 812-847 (DLHQ…CGCS), and 917-952 (SSQL…FCYK). 4 residues coordinate Ca(2+): aspartate 602, aspartate 604, aspartate 606, and aspartate 613. Threonine 732 bears the Phosphothreonine mark.

As to quaternary structure, microtubule inner protein component of sperm flagellar doublet microtubules. Binds PARK7. Part of a ternary complex containing PARK7, EFCAB6/DJBP and AR.

It is found in the nucleus. It localises to the cytoplasm. The protein localises to the cytoskeleton. Its subcellular location is the flagellum axoneme. Negatively regulates the androgen receptor by recruiting histone deacetylase complex, and protein DJ-1 antagonizes this inhibition by abrogation of this complex. Microtubule inner protein (MIP) part of the dynein-decorated doublet microtubules (DMTs) in cilia axoneme, which is required for motile cilia beating. In Pongo abelii (Sumatran orangutan), this protein is EF-hand calcium-binding domain-containing protein 6 (EFCAB6).